The following is a 193-amino-acid chain: ATP-dependent Clp protease proteolytic subunit 2 (193 aa).

The active-site Nucleophile is the serine 98. The active site involves histidine 123.

The protein belongs to the peptidase S14 family. Fourteen ClpP subunits assemble into 2 heptameric rings which stack back to back to give a disk-like structure with a central cavity, resembling the structure of eukaryotic proteasomes.

It localises to the cytoplasm. The catalysed reaction is Hydrolysis of proteins to small peptides in the presence of ATP and magnesium. alpha-casein is the usual test substrate. In the absence of ATP, only oligopeptides shorter than five residues are hydrolyzed (such as succinyl-Leu-Tyr-|-NHMec, and Leu-Tyr-Leu-|-Tyr-Trp, in which cleavage of the -Tyr-|-Leu- and -Tyr-|-Trp bonds also occurs).. In terms of biological role, cleaves peptides in various proteins in a process that requires ATP hydrolysis. Has a chymotrypsin-like activity. Plays a major role in the degradation of misfolded proteins. The chain is ATP-dependent Clp protease proteolytic subunit 2 from Bacillus cereus (strain ATCC 14579 / DSM 31 / CCUG 7414 / JCM 2152 / NBRC 15305 / NCIMB 9373 / NCTC 2599 / NRRL B-3711).